We begin with the raw amino-acid sequence, 465 residues long: Putative apoptosis inhibitor ORF106 (465 aa).

One copy of the BIR repeat lies at 291–357; it reads RECSFSTWPK…MEKETCGWLE (67 aa). The span at 373 to 382 shows a compositional bias: acidic residues; it reads EGGEDKEEDG. Positions 373–393 are disordered; that stretch reads EGGEDKEEDGGGGGVIEFPKN. The RING-type zinc finger occupies 405–447; that stretch reads CKACYERKADIAFIPCGHVFSCNICTMEMFASYKKKKRCPMCR.

The chain is Putative apoptosis inhibitor ORF106 from Magallana gigas (Pacific oyster).